Reading from the N-terminus, the 151-residue chain is Putative pre-16S rRNA nuclease (151 aa).

It belongs to the YqgF nuclease family.

The protein localises to the cytoplasm. In terms of biological role, could be a nuclease involved in processing of the 5'-end of pre-16S rRNA. The polypeptide is Putative pre-16S rRNA nuclease (Neisseria meningitidis serogroup C (strain 053442)).